A 250-amino-acid polypeptide reads, in one-letter code: N-acyl homoserine lactonase (250 aa).

Residues His104, His106, Asp108, His109, His169, Asp191, and His235 each coordinate Zn(2+).

This sequence belongs to the metallo-beta-lactamase superfamily. Monomer. Requires Zn(2+) as cofactor.

The enzyme catalyses an N-acyl-L-homoserine lactone + H2O = an N-acyl-L-homoserine + H(+). With respect to regulation, completely inhibited by Cu(2+) and Ag(+). Partially inhibited by Cr(2+), Pb(2+) and Fe(2+). Mg(2+), Ca(2+), Mn(2+), Co(2+), Ni(2+), Zn(2+) and Cd(2+) have no effect on activity. The chelating agents EDTA, 2,2'bipyridine and o-phenanthroline have no effect on enzyme activity. Hydrolyzes acyl homoserine lactones with varying lengths of acyl chains, with a slight preference for substrates without 3-oxo substitution at the C3 position. Has only residual activity towards non-acyl lactones, and no activity towards non-cyclic esters. The sequence is that of N-acyl homoserine lactonase from Bacillus sp.